The following is a 301-amino-acid chain: Probable 5-dehydro-4-deoxyglucarate dehydratase (301 aa).

The protein belongs to the DapA family.

The enzyme catalyses 5-dehydro-4-deoxy-D-glucarate + H(+) = 2,5-dioxopentanoate + CO2 + H2O. It participates in carbohydrate acid metabolism; D-glucarate degradation; 2,5-dioxopentanoate from D-glucarate: step 2/2. This chain is Probable 5-dehydro-4-deoxyglucarate dehydratase, found in Allorhizobium ampelinum (strain ATCC BAA-846 / DSM 112012 / S4) (Agrobacterium vitis (strain S4)).